The primary structure comprises 307 residues: GTPase Era (307 aa).

The region spanning 13-180 (RCGFVALIGA…RRALAEMVPP (168 aa)) is the Era-type G domain. Positions 21-28 (GAPNVGKS) are G1. A GTP-binding site is contributed by 21–28 (GAPNVGKS). The interval 47–51 (QTTRA) is G2. The G3 stretch occupies residues 68-71 (DTPG). GTP contacts are provided by residues 68 to 72 (DTPGI) and 130 to 133 (NKVD). The tract at residues 130–133 (NKVD) is G4. The tract at residues 159–161 (ISA) is G5. A KH type-2 domain is found at 211–288 (LHQELPYQST…HLFLFVKVRE (78 aa)).

The protein belongs to the TRAFAC class TrmE-Era-EngA-EngB-Septin-like GTPase superfamily. Era GTPase family. In terms of assembly, monomer.

The protein resides in the cytoplasm. Its subcellular location is the cell inner membrane. In terms of biological role, an essential GTPase that binds both GDP and GTP, with rapid nucleotide exchange. Plays a role in 16S rRNA processing and 30S ribosomal subunit biogenesis and possibly also in cell cycle regulation and energy metabolism. The protein is GTPase Era of Bradyrhizobium sp. (strain ORS 278).